A 2250-amino-acid chain; its full sequence is RNA1 polyprotein (2250 aa).

Over residues 346–371 (SPTVTPSSTPSTSRSSSPEPRVSSPS) the composition is skewed to low complexity. Residues 346 to 372 (SPTVTPSSTPSTSRSSSPEPRVSSPSG) are disordered. One can recognise an SF3 helicase domain in the interval 849 to 1020 (LRDAHNALSR…PHFHEFNLLA (172 aa)). The helical transmembrane segment at 1225–1245 (VALCAVLLVGYLIIKFAIFLF) threads the bilayer. O-(5'-phospho-RNA)-serine is present on serine 1299. Residues 1319–1532 (GPEEEPSQSL…YAQIVTLDDF (214 aa)) enclose the Peptidase C3 domain. Catalysis depends on for picornain 3C-like protease activity residues histidine 1362, aspartate 1400, and cysteine 1495. Residues 1814 to 1956 (TNWFNGDYSR…SVNDVITEKF (143 aa)) form the RdRp catalytic domain.

It belongs to the comoviridae genome polyprotein B family. Specific enzymatic cleavages by picornain 3C-like protease in vivo yield mature proteins. Picornain 3C-like protease is autocatalytically processed. Post-translationally, viral genome-linked protein (VPg) is uridylylated by the polymerase and is covalently linked to the 5'-end of genomic RNA. This uridylylated form acts as a nucleotide-peptide primer for the polymerase.

It localises to the host membrane. It carries out the reaction RNA(n) + a ribonucleoside 5'-triphosphate = RNA(n+1) + diphosphate. Its function is as follows. Picornain 3C-like protease is a thiol protease that probably cleaves the B and M polyproteins. Functionally, viral genome-linked protein (VPg) plays a role in RNA replication. In Balsamorhiza sagittata (Apple), this protein is RNA1 polyprotein.